The sequence spans 470 residues: ATP synthase subunit beta (470 aa).

157 to 164 (GGAGVGKT) serves as a coordination point for ATP.

Belongs to the ATPase alpha/beta chains family. In terms of assembly, F-type ATPases have 2 components, CF(1) - the catalytic core - and CF(0) - the membrane proton channel. CF(1) has five subunits: alpha(3), beta(3), gamma(1), delta(1), epsilon(1). CF(0) has three main subunits: a(1), b(2) and c(9-12). The alpha and beta chains form an alternating ring which encloses part of the gamma chain. CF(1) is attached to CF(0) by a central stalk formed by the gamma and epsilon chains, while a peripheral stalk is formed by the delta and b chains.

The protein resides in the cell inner membrane. The enzyme catalyses ATP + H2O + 4 H(+)(in) = ADP + phosphate + 5 H(+)(out). Produces ATP from ADP in the presence of a proton gradient across the membrane. The catalytic sites are hosted primarily by the beta subunits. This chain is ATP synthase subunit beta, found in Citrifermentans bemidjiense (strain ATCC BAA-1014 / DSM 16622 / JCM 12645 / Bem) (Geobacter bemidjiensis).